We begin with the raw amino-acid sequence, 306 residues long: Protoheme IX farnesyltransferase (306 aa).

Helical transmembrane passes span 31–50 (VIELLLVTTAPVMILAQGGW), 55–77 (LILGVLVGGTLSAGSANAFNCYI), 104–124 (LVFAWIIGVASIIWLGVISNW), 125–145 (LAAALSLAAILFYVFVYTLWL), 168–188 (WAAVTGDISWAPVILFMIVFL), 218–235 (GRAAVGLQTILYSWATLA), 238–258 (LLLIPVAGMGLVYTLAALAGG), and 286–306 (ASISYLSLLFLAVGIDPLLPF).

Belongs to the UbiA prenyltransferase family. Protoheme IX farnesyltransferase subfamily.

It is found in the cell membrane. It carries out the reaction heme b + (2E,6E)-farnesyl diphosphate + H2O = Fe(II)-heme o + diphosphate. The protein operates within porphyrin-containing compound metabolism; heme O biosynthesis; heme O from protoheme: step 1/1. Converts heme B (protoheme IX) to heme O by substitution of the vinyl group on carbon 2 of heme B porphyrin ring with a hydroxyethyl farnesyl side group. This is Protoheme IX farnesyltransferase from Clavibacter sepedonicus (Clavibacter michiganensis subsp. sepedonicus).